Consider the following 224-residue polypeptide: uncharacterized protein (224 aa).

The Matrin-type zinc-finger motif lies at 11–42 (YYCKYCQIFVKDTPFARRSHEQTYKHQDAIKK). Over residues 67–80 (ATATTASAVSSELA) the composition is skewed to low complexity. 2 disordered regions span residues 67-158 (ATAT…RNRE) and 172-224 (VKPK…YDQS). The segment covering 87-98 (KEHPKLRPSKKK) has biased composition (basic residues). Over residues 108 to 122 (TSSTETDTISTTHTS) the composition is skewed to low complexity. Positions 175–199 (KNLDKVPKLAENEGNKSLESKESNE) are enriched in basic and acidic residues. Positions 203–216 (VFKKKKSGKLRTKS) are enriched in basic residues.

The protein resides in the nucleus. It localises to the nucleolus. This is an uncharacterized protein from Schizosaccharomyces pombe (strain 972 / ATCC 24843) (Fission yeast).